The sequence spans 695 residues: NADPH--cytochrome P450 reductase (695 aa).

Over 1-8 the chain is Lumenal; the sequence is MAQLDTLD. The chain crosses the membrane as a helical span at residues 9-31; the sequence is VVVLAVLLAGSIAYFTKGTFWAV. The Cytoplasmic portion of the chain corresponds to 32–695; sequence AKDPYASSGP…SGSYQEDVWS (664 aa). The Flavodoxin-like domain maps to 66–221; that stretch reads CVIFYGSQTG…DFLAWKEPMW (156 aa). Residues 72-77, 123-126, 169-178, and D204 each bind FMN; these read SQTGTA, ATYG, and LGNNTYEHYN. Residues 277–538 enclose the FAD-binding FR-type domain; it reads HNPYIAPIVE…HVRHSNFKLP (262 aa). R296 contributes to the NADP(+) binding site. FAD contacts are provided by residues 451–454, 469–471, and 486–489; these read RYYS, TAV, and GVTT. The tract at residues 497–516 is disordered; sequence QKQNGDPSPDPHGQTYAING. Residues T552, 614–615, 620–624, and E656 each bind NADP(+); these read SR and KVYVQ. W694 is an FAD binding site.

It belongs to the NADPH--cytochrome P450 reductase family. The protein in the N-terminal section; belongs to the flavodoxin family. In the C-terminal section; belongs to the flavoprotein pyridine nucleotide cytochrome reductase family. The cofactor is FAD. It depends on FMN as a cofactor.

The protein localises to the endoplasmic reticulum membrane. It is found in the mitochondrion outer membrane. It localises to the cell membrane. It catalyses the reaction 2 oxidized [cytochrome P450] + NADPH = 2 reduced [cytochrome P450] + NADP(+) + H(+). In terms of biological role, this enzyme is required for electron transfer from NADP to cytochrome P450 in microsomes. It can also provide electron transfer to heme oxygenase and cytochrome B5. Involved in ergosterol biosynthesis. This chain is NADPH--cytochrome P450 reductase, found in Emericella nidulans (strain FGSC A4 / ATCC 38163 / CBS 112.46 / NRRL 194 / M139) (Aspergillus nidulans).